Consider the following 654-residue polypeptide: 4-hydroxy-3-methylbut-2-en-1-yl diphosphate synthase (flavodoxin) (654 aa).

The [4Fe-4S] cluster site is built by Cys-557, Cys-560, Cys-591, and Glu-598.

The protein belongs to the IspG family. [4Fe-4S] cluster serves as cofactor.

It carries out the reaction (2E)-4-hydroxy-3-methylbut-2-enyl diphosphate + oxidized [flavodoxin] + H2O + 2 H(+) = 2-C-methyl-D-erythritol 2,4-cyclic diphosphate + reduced [flavodoxin]. It functions in the pathway isoprenoid biosynthesis; isopentenyl diphosphate biosynthesis via DXP pathway; isopentenyl diphosphate from 1-deoxy-D-xylulose 5-phosphate: step 5/6. Its function is as follows. Converts 2C-methyl-D-erythritol 2,4-cyclodiphosphate (ME-2,4cPP) into 1-hydroxy-2-methyl-2-(E)-butenyl 4-diphosphate. The polypeptide is 4-hydroxy-3-methylbut-2-en-1-yl diphosphate synthase (flavodoxin) (Protochlamydia amoebophila (strain UWE25)).